The primary structure comprises 921 residues: Bifunctional aspartokinase/homoserine dehydrogenase, chloroplastic (921 aa).

The N-terminal 87 residues, 1-87, are a transit peptide targeting the chloroplast; the sequence is SLSSAISPSS…DDSVEKVHLP (87 aa). The interval 88–339 is aspartokinase; it reads RGAMWSIHKF…VSEAVVLKTL (252 aa). The tract at residues 340 to 567 is interface; sequence SYQEAWEMSY…LSRTTIAVGI (228 aa). ACT domains follow at residues 417–489 and 498–575; these read VEGT…QVAN and TVGQ…LIGA. The homoserine dehydrogenase stretch occupies residues 568-921; the sequence is VGPGLIGATL…RLASYLGAPS (354 aa). I573 is a binding site for NAD(+). Positions 573, 605, 654, and 678 each coordinate NADP(+). I573 provides a ligand contact to NADPH. Position 654 (T654) interacts with NAD(+). Positions 654 and 678 each coordinate NADPH. 4 residues coordinate Na(+): E705, V708, A710, and L712. NADP(+) contacts are provided by G763 and E766. Residues E766 and D777 each contribute to the L-homoserine site. K781 (proton donor) is an active-site residue. G898 provides a ligand contact to NAD(+). An NADP(+)-binding site is contributed by G898. G898 is a binding site for NADPH.

This sequence in the N-terminal section; belongs to the aspartokinase family. It in the C-terminal section; belongs to the homoserine dehydrogenase family. It depends on a metal cation as a cofactor.

It is found in the plastid. The protein localises to the chloroplast. It carries out the reaction L-homoserine + NADP(+) = L-aspartate 4-semialdehyde + NADPH + H(+). The enzyme catalyses L-homoserine + NAD(+) = L-aspartate 4-semialdehyde + NADH + H(+). It catalyses the reaction L-aspartate + ATP = 4-phospho-L-aspartate + ADP. The protein operates within amino-acid biosynthesis; L-lysine biosynthesis via DAP pathway; (S)-tetrahydrodipicolinate from L-aspartate: step 1/4. It participates in amino-acid biosynthesis; L-methionine biosynthesis via de novo pathway; L-homoserine from L-aspartate: step 1/3. Its pathway is amino-acid biosynthesis; L-methionine biosynthesis via de novo pathway; L-homoserine from L-aspartate: step 3/3. It functions in the pathway amino-acid biosynthesis; L-threonine biosynthesis; L-threonine from L-aspartate: step 1/5. The protein operates within amino-acid biosynthesis; L-threonine biosynthesis; L-threonine from L-aspartate: step 3/5. Its function is as follows. Bifunctional aspartate kinase and homoserine dehydrogenase that catalyzes the first and the third steps toward the synthesis of lysine, methionine and threonine from aspartate. The sequence is that of Bifunctional aspartokinase/homoserine dehydrogenase, chloroplastic from Daucus carota (Wild carrot).